We begin with the raw amino-acid sequence, 217 residues long: Ribonuclease T (217 aa).

The Exonuclease domain occupies 20-195 (VVVDVETAGF…YDTEKTAELF (176 aa)). Mg(2+) is bound by residues Asp23, Glu25, His182, and Asp187. Residue His182 is the Proton donor/acceptor of the active site.

The protein belongs to the RNase T family. In terms of assembly, homodimer. Mg(2+) serves as cofactor.

Its function is as follows. Trims short 3' overhangs of a variety of RNA species, leaving a one or two nucleotide 3' overhang. Responsible for the end-turnover of tRNA: specifically removes the terminal AMP residue from uncharged tRNA (tRNA-C-C-A). Also appears to be involved in tRNA biosynthesis. The sequence is that of Ribonuclease T from Vibrio vulnificus (strain CMCP6).